A 275-amino-acid chain; its full sequence is MAAYTAADVKALREKTGAGMLDCKNALVESEGDVEKAIELLRIKGQKGVAKREDRDASNGLVAVHTDGGLGVMVQLNCETDFVAKSEGFIALSQQVLDQAVAVAATDAESLLASDLGGRTVQELLDEANATMGEKILVPRVARIEGTHVSAYLHRTATDLPPTIGVLVALDAVNDEIGKDVAMHTAAMSPTYLTREDVPAEKVESERRIAEETAREENKPEAAMAKIVEGRVNSYFKDNVLLEQPFAKDPKTTITKLLAGAGVHVTSFARFRAGA.

The tract at residues 80–83 is involved in Mg(2+) ion dislocation from EF-Tu; sequence TDFV.

Belongs to the EF-Ts family.

It is found in the cytoplasm. Associates with the EF-Tu.GDP complex and induces the exchange of GDP to GTP. It remains bound to the aminoacyl-tRNA.EF-Tu.GTP complex up to the GTP hydrolysis stage on the ribosome. This Kineococcus radiotolerans (strain ATCC BAA-149 / DSM 14245 / SRS30216) protein is Elongation factor Ts.